Here is a 51-residue protein sequence, read N- to C-terminus: MRDKIRLVSSAGTGYFYTTDKNKRTMPEKMEIKKFDPVVRKHVIFKEAKIK.

The protein belongs to the bacterial ribosomal protein bL33 family.

The sequence is that of Large ribosomal subunit protein bL33 from Idiomarina loihiensis (strain ATCC BAA-735 / DSM 15497 / L2-TR).